Reading from the N-terminus, the 198-residue chain is Thymidylate kinase (198 aa).

10 to 17 (GLDGSGKT) contacts ATP.

It belongs to the thymidylate kinase family.

It catalyses the reaction dTMP + ATP = dTDP + ADP. Functionally, phosphorylation of dTMP to form dTDP in both de novo and salvage pathways of dTTP synthesis. This chain is Thymidylate kinase, found in Thermus thermophilus (strain ATCC BAA-163 / DSM 7039 / HB27).